We begin with the raw amino-acid sequence, 255 residues long: Tachylectin-2 (255 aa).

The signal sequence occupies residues 1-19; the sequence is MKFLLVVLGFIGFLKDGIT. WD repeat units follow at residues 20-67, 68-114, 115-161, 162-208, and 209-255; these read VGGE…FLFL, SPGG…FLFF, DPNG…FLFF, HPNG…FLFF, and SSVG…FLFF.

As to quaternary structure, monomer.

Its subcellular location is the secreted. It localises to the cytoplasmic granule. Its function is as follows. Lectin that binds specifically to N-acetylglucosamine and N-acetylgalactosamine. Is part of the innate immunity host defense system of the horseshoe crab. In Tachypleus tridentatus (Japanese horseshoe crab), this protein is Tachylectin-2.